The sequence spans 117 residues: Large ribosomal subunit protein uL18 (117 aa).

This sequence belongs to the universal ribosomal protein uL18 family. Part of the 50S ribosomal subunit; part of the 5S rRNA/L5/L18/L25 subcomplex. Contacts the 5S and 23S rRNAs.

Its function is as follows. This is one of the proteins that bind and probably mediate the attachment of the 5S RNA into the large ribosomal subunit, where it forms part of the central protuberance. The chain is Large ribosomal subunit protein uL18 from Alkalilimnicola ehrlichii (strain ATCC BAA-1101 / DSM 17681 / MLHE-1).